The following is a 108-amino-acid chain: Glutaredoxin (108 aa).

Residues 3–103 form the Glutaredoxin domain; that stretch reads LAKAKEIVSG…PLLTEAGAIA (101 aa). A disulfide bond links cysteine 23 and cysteine 26.

Belongs to the glutaredoxin family. CPYC subfamily.

The protein localises to the cytoplasm. Functionally, has a glutathione-disulfide oxidoreductase activity in the presence of NADPH and glutathione reductase. Reduces low molecular weight disulfides and proteins. This Solanum lycopersicum (Tomato) protein is Glutaredoxin.